The following is a 288-amino-acid chain: Elongation factor Ts (288 aa).

Positions threonine 82–valine 85 are involved in Mg(2+) ion dislocation from EF-Tu.

Belongs to the EF-Ts family.

Its subcellular location is the cytoplasm. Its function is as follows. Associates with the EF-Tu.GDP complex and induces the exchange of GDP to GTP. It remains bound to the aminoacyl-tRNA.EF-Tu.GTP complex up to the GTP hydrolysis stage on the ribosome. The polypeptide is Elongation factor Ts (Prosthecochloris aestuarii (strain DSM 271 / SK 413)).